A 509-amino-acid chain; its full sequence is Cytochrome P450 monooxygenase ARMGADRAFT_974139 (509 aa).

A helical transmembrane segment spans residues 4–24 (ASLAVVVWAILLVLWLRRIFG). Residues N96 and N279 are each glycosylated (N-linked (GlcNAc...) asparagine). C439 is a heme binding site.

It belongs to the cytochrome P450 family. Requires heme as cofactor.

The protein localises to the membrane. The protein operates within secondary metabolite biosynthesis. In terms of biological role, cytochrome P450 monooxygenase, part of the gene cluster that mediates the biosynthesis of melleolides, a range of antifungal and phytotoxic polyketide derivatives composed of an orsellinic acid (OA) moiety esterified to various sesquiterpene alcohols. The first step in melleolides biosynthesis is performed by the delta(6)-protoilludene synthase PRO1 which catalyzes the cyclization of farnesyl diphosphate to protoilludene. The orsellinic acid synthase armB produces OA by condensing acetyl-CoA with 3 malonyl-CoA units in a three-round chain elongation reaction folowed by a C2-C7 ring closure. ArmB further catalyzes the trans-esterification of OA to the various sesquiterpene alcohols resulting from the hydroxylation of protoilludene. The melleolides cluster also includes 5 cytochrome P450 monooxygenases, 4 NAD(+)-dependent oxidoreductases, one flavin-dependent oxidoreductase, and one O-methyltransferase. The cytochrome P450 monooxygenases may be involved in protoilludene hydroxylation to elaborate melleolides with multiple alcohol groups, such as melleolide D, which carries alcohol functionalities at C-4, C-5, C-10, and C-13. The role of the NAD(+)-dependent enzymes remains unknown. Numerous melleolides, including arnamial, show 5'-O-methylation of the aromatic moiety which may be catalyzed by the methyltransferase encoded in the cluster. The flavin-dependent oxidoreductase might represent the dehydrogenase yielding the aldehyde in position 1 of arnamial and other melleolides. Finally, several halogenase localized outside of the cluster, are able to catalyze the transfer of a single chlorine atom to the melleolide backbone, resulting in a 6'-chloromelleolide product. This chain is Cytochrome P450 monooxygenase ARMGADRAFT_974139, found in Armillaria gallica (Bulbous honey fungus).